Consider the following 760-residue polypeptide: Catalase-peroxidase (760 aa).

The interval 1–24 is disordered; sequence MAESKCPFKSQGSRSNVAGGGTRN. Residues 96-242 constitute a cross-link (tryptophyl-tyrosyl-methioninium (Trp-Tyr) (with M-268)); it reads WHSAGTYRVF…LAAAHMGLIY (147 aa). Catalysis depends on H97, which acts as the Proton acceptor. A cross-link (tryptophyl-tyrosyl-methioninium (Tyr-Met) (with W-96)) is located at residues 242–268; sequence YVNPEGPDGNPDPVAAAHDIRVTFGRM. Position 283 (H283) interacts with heme b.

Belongs to the peroxidase family. Peroxidase/catalase subfamily. As to quaternary structure, homodimer or homotetramer. The cofactor is heme b. Post-translationally, formation of the three residue Trp-Tyr-Met cross-link is important for the catalase, but not the peroxidase activity of the enzyme.

The protein resides in the cytoplasm. It catalyses the reaction H2O2 + AH2 = A + 2 H2O. The catalysed reaction is 2 H2O2 = O2 + 2 H2O. Its function is as follows. Bifunctional enzyme with both catalase and broad-spectrum peroxidase activity. This Aspergillus clavatus (strain ATCC 1007 / CBS 513.65 / DSM 816 / NCTC 3887 / NRRL 1 / QM 1276 / 107) protein is Catalase-peroxidase.